Reading from the N-terminus, the 201-residue chain is Small ribosomal subunit protein uS4 (201 aa).

Residues 27-47 (SKKNYPPGQHGNSRKRKTSEY) are disordered. Residues 92–152 (GRLDNVVYRL…EKSKSMEVIA (61 aa)) enclose the S4 RNA-binding domain.

Belongs to the universal ribosomal protein uS4 family. As to quaternary structure, part of the 30S ribosomal subunit. Contacts protein S5. The interaction surface between S4 and S5 is involved in control of translational fidelity.

Its function is as follows. One of the primary rRNA binding proteins, it binds directly to 16S rRNA where it nucleates assembly of the body of the 30S subunit. In terms of biological role, with S5 and S12 plays an important role in translational accuracy. In Parabacteroides distasonis (strain ATCC 8503 / DSM 20701 / CIP 104284 / JCM 5825 / NCTC 11152), this protein is Small ribosomal subunit protein uS4.